The chain runs to 382 residues: D-galactonate dehydratase (382 aa).

A Mg(2+)-binding site is contributed by aspartate 183. Histidine 185 functions as the Proton donor in the catalytic mechanism. The Mg(2+) site is built by glutamate 209 and glutamate 235. Histidine 285 (proton acceptor) is an active-site residue.

The protein belongs to the mandelate racemase/muconate lactonizing enzyme family. GalD subfamily. It depends on Mg(2+) as a cofactor.

It carries out the reaction D-galactonate = 2-dehydro-3-deoxy-D-galactonate + H2O. It functions in the pathway carbohydrate acid metabolism; D-galactonate degradation; D-glyceraldehyde 3-phosphate and pyruvate from D-galactonate: step 1/3. In terms of biological role, catalyzes the dehydration of D-galactonate to 2-keto-3-deoxy-D-galactonate. This is D-galactonate dehydratase from Variovorax paradoxus (strain S110).